We begin with the raw amino-acid sequence, 631 residues long: tRNA uridine 5-carboxymethylaminomethyl modification enzyme MnmG (631 aa).

15–20 (GAGHAG) lines the FAD pocket. Residues 214-233 (YSKTEEEPGDKEPRHFSFTS) form a disordered region. 276–290 (GPRYCPSIETKVVRF) lines the NAD(+) pocket.

The protein belongs to the MnmG family. As to quaternary structure, homodimer. Heterotetramer of two MnmE and two MnmG subunits. It depends on FAD as a cofactor.

It is found in the cytoplasm. NAD-binding protein involved in the addition of a carboxymethylaminomethyl (cmnm) group at the wobble position (U34) of certain tRNAs, forming tRNA-cmnm(5)s(2)U34. In Lactobacillus delbrueckii subsp. bulgaricus (strain ATCC 11842 / DSM 20081 / BCRC 10696 / JCM 1002 / NBRC 13953 / NCIMB 11778 / NCTC 12712 / WDCM 00102 / Lb 14), this protein is tRNA uridine 5-carboxymethylaminomethyl modification enzyme MnmG.